The primary structure comprises 392 residues: Phosphoglycerate kinase (392 aa).

Substrate is bound by residues 21 to 23, R36, 59 to 62, R117, and R150; these read DFN and HLGR. ATP-binding positions include K200, G288, E319, and 345-348; that span reads GGDS.

The protein belongs to the phosphoglycerate kinase family. As to quaternary structure, monomer.

It localises to the cytoplasm. It carries out the reaction (2R)-3-phosphoglycerate + ATP = (2R)-3-phospho-glyceroyl phosphate + ADP. The protein operates within carbohydrate degradation; glycolysis; pyruvate from D-glyceraldehyde 3-phosphate: step 2/5. The chain is Phosphoglycerate kinase from Rubrobacter xylanophilus (strain DSM 9941 / JCM 11954 / NBRC 16129 / PRD-1).